The sequence spans 440 residues: Xylose isomerase (440 aa).

Residues histidine 100 and aspartate 103 contribute to the active site. Glutamate 231, glutamate 267, histidine 270, aspartate 295, aspartate 306, aspartate 308, and aspartate 338 together coordinate Mg(2+).

The protein belongs to the xylose isomerase family. Homotetramer. It depends on Mg(2+) as a cofactor.

It localises to the cytoplasm. It catalyses the reaction alpha-D-xylose = alpha-D-xylulofuranose. This is Xylose isomerase from Burkholderia vietnamiensis (strain G4 / LMG 22486) (Burkholderia cepacia (strain R1808)).